The chain runs to 238 residues: tRNA (guanine-N(7)-)-methyltransferase (238 aa).

S-adenosyl-L-methionine contacts are provided by Glu70, Asp95, Asp122, and Asp145. Asp145 is a catalytic residue. Substrate is bound by residues Lys149, Asp181, and 216 to 219 (TKFE).

It belongs to the class I-like SAM-binding methyltransferase superfamily. TrmB family.

The catalysed reaction is guanosine(46) in tRNA + S-adenosyl-L-methionine = N(7)-methylguanosine(46) in tRNA + S-adenosyl-L-homocysteine. Its pathway is tRNA modification; N(7)-methylguanine-tRNA biosynthesis. Its function is as follows. Catalyzes the formation of N(7)-methylguanine at position 46 (m7G46) in tRNA. The sequence is that of tRNA (guanine-N(7)-)-methyltransferase from Neisseria meningitidis serogroup A / serotype 4A (strain DSM 15465 / Z2491).